The primary structure comprises 466 residues: Cysteine--tRNA ligase (466 aa).

Residue Cys-27 participates in Zn(2+) binding. The 'HIGH' region signature appears at 29–39 (PTVYDLAHIGN). Cys-211, His-236, and Glu-240 together coordinate Zn(2+). Residues 270–274 (KMSKS) carry the 'KMSKS' region motif. ATP is bound at residue Lys-273.

Belongs to the class-I aminoacyl-tRNA synthetase family. Monomer. Zn(2+) is required as a cofactor.

It is found in the cytoplasm. It catalyses the reaction tRNA(Cys) + L-cysteine + ATP = L-cysteinyl-tRNA(Cys) + AMP + diphosphate. The chain is Cysteine--tRNA ligase from Anaplasma marginale (strain St. Maries).